Reading from the N-terminus, the 203-residue chain is Probable cytochrome c oxidase subunit 3 (203 aa).

5 consecutive transmembrane segments (helical) span residues 30 to 50 (IVWL…YFSA), 71 to 91 (VPVT…VFAA), 96 to 116 (IFGL…FVLG), 143 to 163 (ATGF…FLLV), and 179 to 199 (IVVS…FTVI).

It belongs to the cytochrome c oxidase subunit 3 family.

It is found in the cell membrane. The enzyme catalyses 4 Fe(II)-[cytochrome c] + O2 + 8 H(+)(in) = 4 Fe(III)-[cytochrome c] + 2 H2O + 4 H(+)(out). The polypeptide is Probable cytochrome c oxidase subunit 3 (ctaE) (Mycobacterium bovis (strain ATCC BAA-935 / AF2122/97)).